Reading from the N-terminus, the 336-residue chain is DNA-directed RNA polymerase subunit alpha (336 aa).

An alpha N-terminal domain (alpha-NTD) region spans residues 1 to 232; sequence MIQKNWQELI…DQLGVFVNFD (232 aa). An alpha C-terminal domain (alpha-CTD) region spans residues 248–336; that stretch reads FNPALLKKVD…DLAKRYEDQY (89 aa).

This sequence belongs to the RNA polymerase alpha chain family. Homodimer. The RNAP catalytic core consists of 2 alpha, 1 beta, 1 beta' and 1 omega subunit. When a sigma factor is associated with the core the holoenzyme is formed, which can initiate transcription.

It carries out the reaction RNA(n) + a ribonucleoside 5'-triphosphate = RNA(n+1) + diphosphate. Functionally, DNA-dependent RNA polymerase catalyzes the transcription of DNA into RNA using the four ribonucleoside triphosphates as substrates. In Rhizobium rhizogenes (strain K84 / ATCC BAA-868) (Agrobacterium radiobacter), this protein is DNA-directed RNA polymerase subunit alpha.